The following is a 274-amino-acid chain: 2-dehydro-3-deoxyphosphooctonate aldolase (274 aa).

It belongs to the KdsA family.

It is found in the cytoplasm. The catalysed reaction is D-arabinose 5-phosphate + phosphoenolpyruvate + H2O = 3-deoxy-alpha-D-manno-2-octulosonate-8-phosphate + phosphate. Its pathway is carbohydrate biosynthesis; 3-deoxy-D-manno-octulosonate biosynthesis; 3-deoxy-D-manno-octulosonate from D-ribulose 5-phosphate: step 2/3. The protein operates within bacterial outer membrane biogenesis; lipopolysaccharide biosynthesis. The polypeptide is 2-dehydro-3-deoxyphosphooctonate aldolase (Legionella pneumophila (strain Corby)).